Here is a 563-residue protein sequence, read N- to C-terminus: MSETINTAAQFPTFEKPTVQFNEKGWGPCELPDTFKDVPYQPFSKNDRLGKICDWTSTSNNDKKYQNKYASTFGTGNQYAYYHEEDETTFHLVDTARVQKPPHQRGRFRNMRNSRSGRGRNARGGLNTHGHGMTTLSSKNVKARDPRRGMGKRFGNRGPPPKMRESSVAVRADWASIEEMDFPRLIKLSLPNIKDGEDITTCGTLEYYDKTYDRINVKNEKPLQKIDRIVHTVTTTDDPVIRRLSKTIGNVFATDAILATIMCSTRSNYSWDIVIEKVGEKIFMDKRDHTEFDLLTVNETSVEPPTDDDSSCNSPRNLAIEATFINHNFSQQVLKTGDQEAKYKFEETNPFISEDEDIQVASVGYRYKKWELGSDIVLVARCEHDGVLQTPSGEPQFLSIKALNEWDSKLANGVEWRQKLDTQRGAVLANELRNNACKLAKWTVQAVLAGSDQLKLGYVSRINPRDHSRHVILGTQQFKPHEFATQINLSMDNAWGILRCIIDLVMKQKDGKYLIMKDPNKPIIRLYDIPDNTFDSDDSDDGEGDDGEGFQQVYNYANNSNKI.

Residues 98–167 (VQKPPHQRGR…GPPPKMRESS (70 aa)) form a disordered region. Residues 100–121 (KPPHQRGRFRNMRNSRSGRGRN) show a composition bias toward basic residues. Threonine 128 is modified (phosphothreonine). The tract at residues 291 to 305 (EFDLLTVNETSVEPP) is RNA gate.

Belongs to the eIF-3 subunit D family. In terms of assembly, component of the eukaryotic translation initiation factor 3 (eIF-3) complex. The eIF-3 complex interacts with pix.

The protein resides in the cytoplasm. Its function is as follows. mRNA cap-binding component of the eukaryotic translation initiation factor 3 (eIF-3) complex, which is involved in protein synthesis of a specialized repertoire of mRNAs and, together with other initiation factors, stimulates binding of mRNA and methionyl-tRNAi to the 40S ribosome. The eIF-3 complex specifically targets and initiates translation of a subset of mRNAs involved in cell proliferation. In the eIF-3 complex, eif3d specifically recognizes and binds the 7-methylguanosine cap of a subset of mRNAs. In Drosophila virilis (Fruit fly), this protein is Eukaryotic translation initiation factor 3 subunit D-1.